Consider the following 405-residue polypeptide: Pre-mRNA-splicing factor cwc-24 (405 aa).

Disordered regions lie at residues Met1–Tyr114 and Thr162–Tyr184. The span at Glu15–Ala29 shows a compositional bias: low complexity. A compositionally biased stretch (basic residues) spans Phe31–Pro46. Residues Ser56 to Ala70 are compositionally biased toward acidic residues. A compositionally biased stretch (basic residues) spans Arg74 to His83. Residues Asp221–Glu249 form a C3H1-type zinc finger. The RING-type zinc finger occupies Cys310–Gly349. Positions Lys370–Glu386 are enriched in basic and acidic residues. The segment at Lys370 to Asp405 is disordered. A compositionally biased stretch (acidic residues) spans Val387 to Asp405.

Belongs to the CWC24 family. In terms of assembly, associated with the spliceosome.

It localises to the nucleus. Functionally, involved in pre-mRNA splicing. The chain is Pre-mRNA-splicing factor cwc-24 (cwc-24) from Neurospora crassa (strain ATCC 24698 / 74-OR23-1A / CBS 708.71 / DSM 1257 / FGSC 987).